The sequence spans 139 residues: Arsenate reductase (139 aa).

Residues Cys-10, Cys-82, and Cys-89 each act as nucleophile in the active site. 2 disulfide bridges follow: Cys-10-Cys-82 and Cys-82-Cys-89.

The protein belongs to the low molecular weight phosphotyrosine protein phosphatase family. Thioredoxin-coupled ArsC subfamily.

The protein resides in the cytoplasm. It catalyses the reaction arsenate + [thioredoxin]-dithiol + H(+) = arsenite + [thioredoxin]-disulfide + H2O. Catalyzes the reduction of arsenate [As(V)] to arsenite [As(III)]. The chain is Arsenate reductase from Oceanobacillus iheyensis (strain DSM 14371 / CIP 107618 / JCM 11309 / KCTC 3954 / HTE831).